The chain runs to 243 residues: Small ribosomal subunit protein uS3 (243 aa).

Residues 38–106 form the KH type-2 domain; the sequence is IRKYLNARLA…DIQINIFEVK (69 aa). Residues 214–243 form a disordered region; that stretch reads PNFTQSKESGRGNNGGNNGGKNFKRKKNNR.

Belongs to the universal ribosomal protein uS3 family. In terms of assembly, part of the 30S ribosomal subunit. Forms a tight complex with proteins S10 and S14.

Its function is as follows. Binds the lower part of the 30S subunit head. Binds mRNA in the 70S ribosome, positioning it for translation. The chain is Small ribosomal subunit protein uS3 from Bacteroides thetaiotaomicron (strain ATCC 29148 / DSM 2079 / JCM 5827 / CCUG 10774 / NCTC 10582 / VPI-5482 / E50).